We begin with the raw amino-acid sequence, 292 residues long: Polyketide transferase af380 (292 aa).

The segment at 46–267 (DVAVWFQQQG…FDLVAGRGHM (222 aa)) is abhydrolase domain.

This sequence belongs to the polyketide transferase af380 family.

The enzyme catalyses fumagillol + dodecapentaneoyl-[polyketide synthase] = prefumagillin + holo-[polyketide synthase]. Its pathway is secondary metabolite biosynthesis; terpenoid biosynthesis. Functionally, polyketide transferase; part of the gene cluster that mediates the biosynthesis of fumagillin, a meroterpenoid that has numerous biological activities including irreversible inhibition of human type 2 methionine aminopeptidase (METAP2). Within the pathway, the polyketide transferase af380 catalyzes the transfer of a dodecapentaenoyl group synthesized by the polyketide synthase af370 onto 5R-hydroxy-seco-sesquiterpene to produce prefumagillin. The pathway begins with the conversion of farnesyl pyrophosphate (FPP) to beta-trans-bergamotene by the membrane-bound beta-trans-bergamotene synthase af520. The multifunctional cytochrome P450 monooxygenase af510 then converts beta-trans-bergamotene into 5-keto-demethoxyfumagillol via several oxydation steps. 5-keto-demethoxyfumagillol is then subjected to successive C-6 hydroxylation and O-methylation by the dioxygenase af480 and O-methyltransferase af390-400, respectively, to yield 5-keto-fumagillol, which is then stereoselectively reduced by the keto-reductase af490 to 5R-hydroxy-seco-sesquiterpene. The next step is the polyketide transferase af380-catalyzed transfer of a dodecapentaenoyl group synthesized by the polyketide synthase af370 onto 5R-hydroxy-seco-sesquiterpene which leads to the production of prefumagillin. Finally, oxidative cleavage by the monooxygenase af470 converts prefumagillin to fumagillin. The sequence is that of Polyketide transferase af380 from Aspergillus fumigatus (strain ATCC MYA-4609 / CBS 101355 / FGSC A1100 / Af293) (Neosartorya fumigata).